The sequence spans 490 residues: 5'-3' exonuclease PLD3 (490 aa).

Residues methionine 1–tryptophan 38 lie on the Cytoplasmic side of the membrane. A helical; Signal-anchor for type II membrane protein transmembrane segment spans residues valine 39–leucine 59. Residues tryptophan 60–leucine 490 lie on the Lumenal side of the membrane. 2 disulfide bridges follow: cysteine 77/cysteine 239 and cysteine 81/cysteine 237. Residues asparagine 97 and asparagine 132 are each glycosylated (N-linked (GlcNAc...) asparagine). The PLD phosphodiesterase 1 domain occupies threonine 196–serine 223. Residues histidine 201, lysine 203, and aspartate 208 contribute to the active site. Histidine 201 acts as the Proton donor in catalysis. Phosphate is bound by residues histidine 201 and lysine 203. Asparagine 218 is a binding site for phosphate. Asparagine 236, asparagine 284, and asparagine 387 each carry an N-linked (GlcNAc...) asparagine glycan. Cysteine 366 and cysteine 487 are joined by a disulfide. Positions tyrosine 411 to tyrosine 437 constitute a PLD phosphodiesterase 2 domain. Histidine 416 contacts phosphate. Histidine 416 (nucleophile) is an active-site residue. Phenylalanine 438 is a Mg(2+) binding site.

Belongs to the phospholipase D family. In terms of assembly, homodimer. Interacts with APP. In terms of processing, N-glycosylated. Post-translationally, proteolytically processed to a soluble active form that is stable within endosomes and lysosomes. During transport through the secretory pathway becomes proteolysed by cysteine proteases, thereby releasing a stable soluble lysosomal lumenal polypeptide, whereas the transmembrane-bound fragment is rapidly degraded. Its transport route to lysosomes involves ubiquitination and the ESCRT complex. Ubiquitinated at N-terminus. Ubiquitination mediates sorting into lysosomes. As to expression, widely expressed. In the brain, high levels of expression are detected in the frontal, temporal and occipital cortices and hippocampus. Expressed at low level in corpus callosum. Expressed in plasmacytoid dendritic cells and monocytes (at protein level).

The protein resides in the endoplasmic reticulum membrane. The protein localises to the lysosome lumen. Its subcellular location is the early endosome membrane. It localises to the late endosome membrane. It is found in the golgi apparatus membrane. The protein resides in the endosome membrane. It carries out the reaction Exonucleolytic cleavage in the 5'- to 3'-direction to yield nucleoside 3'-phosphates.. The enzyme catalyses a 5'-end 5'-dephospho-ribonucleotidyl-ribonucleotide-RNA + H2O = a ribonucleoside 3'-phosphate + a 5'-end dephospho-ribonucleoside-RNA + H(+). The catalysed reaction is a ribonucleoside 3'-phosphate-2'-3'-cyclophospho-GMP + H2O = a ribonucleoside 3'-phosphate + 2',3'-cyclophospho-GMP + H(+). It catalyses the reaction a 5'-end 5'-dephospho-2'-deoxyribonucleotidyl-2'-deoxyribonucleotide in single-stranded DNA + H2O = a 5'-end dephospho-2'-deoxyribonucleoside in single-stranded DNA + a 2'-deoxyribonucleoside 3'-phosphate + H(+). It carries out the reaction a 5'-end 5'-phospho-2'-deoxyribonucleotide in single-stranded DNA + H2O = a 5'-end 5'-dephospho-2'-deoxyribonucleotide in single-stranded DNA + phosphate. The enzyme catalyses a 3-lyso-sn-glycero-1-phospho-(3'-acyl-1'-sn-glycerol) + a 1-acyl-sn-glycerol = a 3-acyl-sn-glycero-1-phospho-(3'-acyl-1'-sn-glycerol) + glycerol. The catalysed reaction is 3-lyso-sn-glycero-1-phospho-(3'-(9Z-octadecenoyl)-1'-sn-glycerol) + 1-(9Z-octadecenoyl)-sn-glycerol = 3-(9Z-octadecenoyl)-sn-glycero-1-phospho-(3'-(9Z-octadecenoyl)-1'-sn-glycerol) + glycerol. With respect to regulation, the exonuclease activity toward ssDNA substrate is Ca(2+) and Mg(2+)-independent, but it is inhibited by Fe(2+), Cu(2+) and to a lesser extent Zn(2+) ions. Its function is as follows. 5'-&gt;3' exonuclease that hydrolyzes the phosphodiester bond of single-stranded DNA (ssDNA) and RNA molecules to form nucleoside 3'-monophosphates and 5'-end 5'-hydroxy deoxyribonucleotide/ribonucleotide fragments. Partially redundant with PLD4, can cleave all four nucleotides displaying higher efficiency for ssDNA and RNA fragments initiated with uridine and guanosine residues and lower efficiency for cytidine-initiated substrates. As a result, it does not always degrade polynucleotides to the single nucleotide level, it can stall at specific sites sparing certain fragments from exonucleolytic degradation. Processes self and pathogenic ssDNA and RNA molecules that reach the endolysosomal compartment via phagocytosis or autophagy and may serve as 'danger' signals for recognition by innate immune receptors such as toll-like receptors (TLRs). Degrades mitochondrial CpG-rich ssDNA fragments to prevent TLR9 activation and autoinflammatory response, but it can cleave viral RNA to generate ligands for TLR7 activation and initiate antiviral immune responses. In plasmacytoid dendritic cells, it cooperates with endonuclease RNASET2 to release 2',3'-cyclic guanosine monophosphate (2',3'-cGMP), a potent stimulatory ligand for TLR7. Produces 2',3'-cGMPs and cytidine-rich RNA fragments that occupy TLR7 ligand-binding pockets and trigger a signaling-competent state. Can exert polynucleotide phosphatase activity toward 5'-phosphorylated ssDNA substrates although at a slow rate. Transphosphatidylase that catalyzes the exchange with R to S stereo-inversion of the glycerol moiety between (S,R)-lysophosphatidylglycerol (LPG) and monoacylglycerol (MAG) substrates to yield (S,S)-bis(monoacylglycero)phosphate (BMP). Can synthesize a variety of (S,S)-BMPs representing the main phospholipid constituent of lysosomal intralumenal vesicle (ILV) membranes that bind acid hydrolases for lipid degradation. Regulates the homeostasis and interorganellar communication of the endolysosomal system with an overall impact on cellular removal of dysfunctional organelles via autophagy as well as proper protein and lipid turnover. May play a role in myotube formation in response to ER stress. This Homo sapiens (Human) protein is 5'-3' exonuclease PLD3.